Consider the following 528-residue polypeptide: Alpha-amylase (528 aa).

A signal peptide spans 1–28; that stretch reads MNKKWLNIPALIALLAAIAFGSVAPAEA. The Ca(2+) site is built by Asn-168 and Asp-228. Asp-258 acts as the Nucleophile in catalysis. Ca(2+) is bound at residue His-262. Glu-286 (proton donor) is an active-site residue.

Belongs to the glycosyl hydrolase 13 family. Monomer. Ca(2+) is required as a cofactor.

The catalysed reaction is Endohydrolysis of (1-&gt;4)-alpha-D-glucosidic linkages in polysaccharides containing three or more (1-&gt;4)-alpha-linked D-glucose units.. In Niallia circulans (Bacillus circulans), this protein is Alpha-amylase.